A 61-amino-acid chain; its full sequence is Large ribosomal subunit protein bL32 (61 aa).

Positions 1 to 16 are enriched in basic residues; sequence MAVPRRKTSPSRRGMR. A disordered region spans residues 1–61; sequence MAVPRRKTSP…RQVLKAKSDS (61 aa). Residues 27-44 are compositionally biased toward basic and acidic residues; the sequence is YAEDKDSGELRRPHHLDL.

Belongs to the bacterial ribosomal protein bL32 family.

This is Large ribosomal subunit protein bL32 from Nitrobacter winogradskyi (strain ATCC 25391 / DSM 10237 / CIP 104748 / NCIMB 11846 / Nb-255).